Reading from the N-terminus, the 354-residue chain is Cellular communication network factor 6 (354 aa).

Positions 1 to 23 (MRRLLFCTLLMTGLTQLCCRTQG) are cleaved as a signal peptide. The IGFBP N-terminal domain occupies 44–117 (RTEVCRWPCR…RYETGVCAYL (74 aa)). Disulfide bonds link cysteine 48–cysteine 72, cysteine 52–cysteine 74, cysteine 54–cysteine 75, cysteine 61–cysteine 78, cysteine 86–cysteine 100, cysteine 92–cysteine 114, cysteine 209–cysteine 238, cysteine 219–cysteine 223, cysteine 247–cysteine 252, cysteine 268–cysteine 305, cysteine 285–cysteine 319, cysteine 296–cysteine 335, and cysteine 299–cysteine 337. The region spanning 208–253 (KCLVQATKWTPCSRTCGMGISNRVTNDNANCEMRKERRLCYIQPCS) is the TSP type-1 domain. A CTCK domain is found at 268-342 (CQPTFQLPKA…TSCVCQRDCR (75 aa)). The N-linked (GlcNAc...) asparagine glycan is linked to asparagine 308.

It belongs to the CCN family.

It localises to the secreted. Its subcellular location is the mitochondrion. In terms of biological role, plays a role in mitochondrial electron transport and mitochondrial respiration. This Mus musculus (Mouse) protein is Cellular communication network factor 6.